A 151-amino-acid chain; its full sequence is Multiprotein-bridging factor 1 (151 aa).

Positions Met-1 to Gln-31 are disordered. The HTH cro/C1-type domain maps to Ile-85–Lys-139. Positions Gln-96–Ala-115 form a DNA-binding region, H-T-H motif.

It belongs to the MBF1 family.

Transcriptional coactivator that stimulates GCN4-dependent transcriptional activity by bridging the DNA-binding region of GCN4 and TBP (SPT15), thereby recruiting TBP to GCN4-bound promoters. Involved in induction of the ribosome quality control (RQC) pathway; a pathway that degrades nascent peptide chains during problematic translation. Required to prevent stalled ribosomes from frameshifting. This chain is Multiprotein-bridging factor 1 (MBF1), found in Candida glabrata (strain ATCC 2001 / BCRC 20586 / JCM 3761 / NBRC 0622 / NRRL Y-65 / CBS 138) (Yeast).